The sequence spans 458 residues: Cysteine--tRNA ligase (458 aa).

A Zn(2+)-binding site is contributed by Cys-27. The short motif at 29–39 (ITPQSEPHIGH) is the 'HIGH' region element. The Zn(2+) site is built by Cys-207, His-232, and Glu-236. A 'KMSKS' region motif is present at residues 265 to 269 (KMSKS). Lys-268 is a binding site for ATP.

It belongs to the class-I aminoacyl-tRNA synthetase family. Monomer. Zn(2+) is required as a cofactor.

It localises to the cytoplasm. The enzyme catalyses tRNA(Cys) + L-cysteine + ATP = L-cysteinyl-tRNA(Cys) + AMP + diphosphate. The polypeptide is Cysteine--tRNA ligase (Dehalococcoides mccartyi (strain ATCC BAA-2266 / KCTC 15142 / 195) (Dehalococcoides ethenogenes (strain 195))).